The primary structure comprises 1163 residues: Receptor-type guanylate cyclase gcy-21 (1163 aa).

The first 17 residues, 1 to 17, serve as a signal peptide directing secretion; that stretch reads MLSAVLLLLFFIQNVQN. At 18–490 the chain is on the extracellular side; the sequence is FDKIELEDIT…ENCGPPANNT (473 aa). N-linked (GlcNAc...) asparagine glycosylation is found at N102, N296, N322, N346, N466, and N488. Residues 491–511 form a helical membrane-spanning segment; it reads FIIVISVGVAVLIGLAIAAAF. Residues 512-1163 are Cytoplasmic-facing; that stretch reads LYKRYRYERR…QIQEKTYEFS (652 aa). The Protein kinase domain maps to 587-882; the sequence is FNTGSTARAG…QIKRKLKPLT (296 aa). ATP contacts are provided by residues 593–601 and K635; that span reads ARAGPFGPI. Residues 901–930 are a coiled coil; that stretch reads TDKLEKDIAERNEELEGEKAKSEALLKMML. The 131-residue stretch at 953 to 1083 folds into the Guanylate cyclase domain; the sequence is TVFFSDCPGF…DTVNTASRME (131 aa).

It belongs to the adenylyl cyclase class-4/guanylyl cyclase family. As to expression, expressed in ASG sensory neurons.

Its subcellular location is the cell membrane. The catalysed reaction is GTP = 3',5'-cyclic GMP + diphosphate. Functionally, guanylate cyclase involved in the production of the second messenger cGMP. Plays a role in dauer formation. In Caenorhabditis elegans, this protein is Receptor-type guanylate cyclase gcy-21.